Reading from the N-terminus, the 321-residue chain is Isoaspartyl peptidase (321 aa).

Threonine 179 acts as the Nucleophile in catalysis. Substrate is bound by residues 207–210 (RVGD) and 230–233 (TGTG).

The protein belongs to the Ntn-hydrolase family. As to quaternary structure, heterotetramer of two alpha and two beta chains arranged as a dimer of alpha/beta heterodimers. In terms of processing, autocleaved. Generates the alpha and beta subunits. The N-terminal residue of the beta subunit is thought to be responsible for the nucleophile hydrolase activity. Post-translationally, both subunits undergo further processing at their C-termini. The overexpressed alpha subunit seems to consist of residues 2-161, with an oxidized Met residue and a tightly coordinated Na(+), whereas the overexpressed beta subunit is processed to residue 315 and has 3 oxidized Met residues. Processing of the alpha subunit is inhibited by Zn(2+).

It catalyses the reaction Cleavage of a beta-linked Asp residue from the N-terminus of a polypeptide.. Its function is as follows. Degrades proteins damaged by L-isoaspartyl residue formation (also known as beta-Asp residues). Degrades L-isoaspartyl-containing di- and maybe also tripeptides. Also has L-asparaginase activity, although this may not be its principal function. In terms of biological role, may be involved in glutathione, and possibly other peptide, transport, although these results could also be due to polar effects of disruption. The sequence is that of Isoaspartyl peptidase (iaaA) from Escherichia coli (strain K12).